The sequence spans 334 residues: Glyoxylate reductase (334 aa).

Residues 158-161 (LGRI), 180-182 (SRT), and 239-241 (IAR) contribute to the NADP(+) site. Catalysis depends on residues arginine 241 and glutamate 270. Histidine 288 (proton donor) is an active-site residue. 288–290 (HIG) serves as a coordination point for NADP(+).

Belongs to the D-isomer specific 2-hydroxyacid dehydrogenase family. GyaR subfamily. Homodimer.

It is found in the cytoplasm. The catalysed reaction is glycolate + NAD(+) = glyoxylate + NADH + H(+). This is Glyoxylate reductase (gyaR) from Pyrococcus horikoshii (strain ATCC 700860 / DSM 12428 / JCM 9974 / NBRC 100139 / OT-3).